We begin with the raw amino-acid sequence, 1291 residues long: MAAETQTLNFGPEWLRALSSGGSITSPPLSPALPKYKLADYRYGREEMLALFLKDYKIPFDLLEKEFLPILQEEPLPPLALVPFTEEEQRNFSMSVNSAAVLRLTGRGGGGGTVVGAPRGRSSSRGRGRGRGECGFYQRSFDEVEGVFGRGGGREMHRSQSWEERGDRRFEKPGRKDVGRPNFEESGPTSVGRKHEFIRSESENWRIFREEQNGEDEDGGWRLAGSRRDGERWRPHSPDGPRSTGWREHMERRRRFEFDFRDRDDERGYRRVRSGSGSIDDDRDSLPEWCLEDAEEEMGTFDSSGAFLSLKKVQKEPIPEEQEMDFRPVEEGEERSDSDSSHNEEAKEPDKTNRREGEKTDRAGAEASEEVPQTSLSSARPGTPSDHQPQEATQFERKDEPKAEQVEKAEEENRSENSLSAKVPSRGDETVPASQQPSTPLPPDTASPLLILSPPVPTPSSASRPVETAAVEAPGMSSVSTEPDDEEGLKHLEQQAEKMVAYLQDSALDDERLTSKLQEHRAKGVSIPLMHEAMQKWYYKDPQGEIQGPFNNQEMAEWFQAGYFTMSLLVKRACDESFQPLGDIMKMWGRVPFSPGPAPPPHMGELDQERLTRQQELTALYQMQHLQYQQFLIQQQYAQVLAQQQKAALSSQQQQQLALLLQQFQALKMRMSDQNIIPSVTRSVSVPDTGSIWELQPAASQPAVWEGGSVWDLPLDTTAPGPSLEQLQQLEKAKAAKLEQERREAEMRAKREEEERKRQEELRRQQEEILRRQQEEERKRREEEELARRKQEEALRRQREQEIALRRQREEEERQQQEEALRRLEERRREEEERRKQEELLRKQEEEAAKWAREEEEAQRRLEENRLRMEEEAARLRHEEEERKRKELELQRQKDLMRQRQQQQEALRRLQQQQQQQQLAQMKLPSSSTWGQQSNTATCQSQATLSLAEIQKLEEERERQLREEQRRQQRELMKALQQQQQQQQQQKLSGWGNVSKPAGTTKSLLEIQQEEARQMQKQQQQQQQQQQQHQQSNRARNSTHSNLHTSLGNSVWGSINTGPSNQWASELVSSIWSNADTKNSNMGFWDDAVKEVGPRNSTNKNKNNASLSKSVGVSNRQNKKVEEEEKLLKLFQGVNKAQDGFTQWCEQMLHALNTANNLDVPTFVSFLKEVESPYEVHDYTRAYLGDTSEAKEFAKQFLERRAKQKVNQQRQQQQQQQQQQDSVWGMNHSTLHSVFQTNQSNNQQSNFEAVQSGKKKKKQKMVRADPSLLGFSVNASSERLNMGEIETLDDY.

A2 carries the post-translational modification N-acetylalanine. Phosphoserine occurs at positions 19, 26, and 30. 3 positions are modified to omega-N-methylarginine: R107, R119, and R121. The interval 112–132 (GTVVGAPRGRSSSRGRGRGRG) is disordered. A Phosphoserine modification is found at S140. Disordered regions lie at residues 148-196 (FGRG…RKHE), 209-248 (REEQ…GWRE), and 267-484 (RGYR…TEPD). The residue at position 150 (R150) is an Omega-N-methylarginine. The span at 152-183 (GGREMHRSQSWEERGDRRFEKPGRKDVGRPNF) shows a compositional bias: basic and acidic residues. Phosphoserine is present on residues S161, S190, and S237. A compositionally biased stretch (basic and acidic residues) spans 226 to 248 (SRRDGERWRPHSPDGPRSTGWRE). The DDX6 binding motif motif lies at 281-311 (DDRDSLPEWCLEDAEEEMGTFDSSGAFLSLK). Over residues 290-299 (CLEDAEEEMG) the composition is skewed to acidic residues. The span at 313–364 (VQKEPIPEEQEMDFRPVEEGEERSDSDSSHNEEAKEPDKTNRREGEKTDRAG) shows a compositional bias: basic and acidic residues. Positions 371-393 (VPQTSLSSARPGTPSDHQPQEAT) are enriched in polar residues. At T383 the chain carries Phosphothreonine. The segment covering 394–415 (QFERKDEPKAEQVEKAEEENRS) has biased composition (basic and acidic residues). Positions 534 to 582 (MQKWYYKDPQGEIQGPFNNQEMAEWFQAGYFTMSLLVKRACDESFQPLG) constitute a GYF domain. Residues 548–564 (GPFNNQEMAEWFQAGYF) form a required for GRB10-binding region. Phosphoserine is present on S594. Disordered stretches follow at residues 732-794 (KAKA…QEEA), 846-937 (EEAA…SNTA), 958-998 (ERQL…SKPA), 1011-1053 (EARQ…SVWG), and 1090-1118 (KEVG…NRQN). The segment covering 846–898 (EEAAKWAREEEEAQRRLEENRLRMEEEAARLRHEEEERKRKELELQRQKDLMR) has biased composition (basic and acidic residues). Residues 899–924 (QRQQQQEALRRLQQQQQQQQLAQMKL) show a composition bias toward low complexity. Polar residues predominate over residues 925 to 937 (PSSSTWGQQSNTA). Positions 958–973 (ERQLREEQRRQQRELM) are enriched in basic and acidic residues. Residues 977–986 (QQQQQQQQQQ) are compositionally biased toward low complexity. S995 carries the post-translational modification Phosphoserine. Positions 1015-1031 (MQKQQQQQQQQQQQHQQ) are enriched in low complexity. Residues 1032 to 1053 (SNRARNSTHSNLHTSLGNSVWG) show a composition bias toward polar residues. The segment covering 1096 to 1110 (NSTNKNKNNASLSKS) has biased composition (low complexity). K1129 is covalently cross-linked (Glycyl lysine isopeptide (Lys-Gly) (interchain with G-Cter in SUMO2)). Disordered stretches follow at residues 1202–1223 (AKQK…QDSV) and 1239–1263 (QSNN…KMVR). Low complexity predominate over residues 1208-1220 (QQRQQQQQQQQQQ). The residue at position 1276 (S1276) is a Phosphoserine.

Belongs to the GIGYF family. In terms of assembly, component of the 4EHP-GYF2 complex, at least composed of EIF4E2, GIGYF2 and ZNF598. Interacts (via the 4EHP-binding motif) with EIF4E2; the interaction is direct. Interacts with ZFP36/TTP (via P-P-P-P-G repeats); the interaction is direct. Interacts with GRB10. Interacts (via DDX6 motif) with DDX6 (via RecA-like domain 2). Expressed in heart, liver, kidney and brain as well as in testis.

Functionally, key component of the 4EHP-GYF2 complex, a multiprotein complex that acts as a repressor of translation initiation. In the 4EHP-GYF2 complex, acts as a factor that bridges EIF4E2 to ZFP36/TTP, linking translation repression with mRNA decay. Also recruits and bridges the association of the 4EHP complex with the decapping effector protein DDX6, which is required for the ZFP36/TTP-mediated down-regulation of AU-rich mRNA. May act cooperatively with GRB10 to regulate tyrosine kinase receptor signaling, including IGF1 and insulin receptors. In association with EIF4E2, assists ribosome-associated quality control (RQC) by sequestering the mRNA cap, blocking ribosome initiation and decreasing the translational load on problematic messages. Part of a pathway that works in parallel to RQC-mediated degradation of the stalled nascent polypeptide. GIGYF2 and EIF4E2 work downstream and independently of ZNF598, which seems to work as a scaffold that can recruit them to faulty mRNA even if alternative recruitment mechanisms may exist. This Mus musculus (Mouse) protein is GRB10-interacting GYF protein 2.